A 537-amino-acid polypeptide reads, in one-letter code: O-phosphoserine--tRNA(Cys) ligase (537 aa).

Substrate-binding positions include 186–188, 231–233, 273–274, and asparagine 317; these read HMT, SAS, and YY.

Belongs to the class-II aminoacyl-tRNA synthetase family. O-phosphoseryl-tRNA(Cys) synthetase subfamily. Homotetramer. Interacts with SepCysS.

The catalysed reaction is tRNA(Cys) + O-phospho-L-serine + ATP = O-phospho-L-seryl-tRNA(Cys) + AMP + diphosphate. Catalyzes the attachment of O-phosphoserine (Sep) to tRNA(Cys). This chain is O-phosphoserine--tRNA(Cys) ligase, found in Methanococcus maripaludis (strain C5 / ATCC BAA-1333).